Reading from the N-terminus, the 217-residue chain is FGFR1 oncogene partner 2 homolog (217 aa).

Coiled coils occupy residues 6 to 106 (TIEK…MSKY) and 163 to 188 (KEQE…TRES). The disordered stretch occupies residues 194-217 (KEDASESTSLSGLVTSSDLSLRKS). The segment covering 199-217 (ESTSLSGLVTSSDLSLRKS) has biased composition (polar residues).

This sequence belongs to the SIKE family.

The protein localises to the cytoplasm. The polypeptide is FGFR1 oncogene partner 2 homolog (FGFR1OP2) (Gallus gallus (Chicken)).